The following is a 159-amino-acid chain: ATP-dependent Clp protease adapter protein CLPS1, chloroplastic (159 aa).

The N-terminal 44 residues, 1 to 44, are a transit peptide targeting the chloroplast; it reads METAICGRLALAPSSLFNSKSGDKHLVSKGPCVNRSILMTLSTS.

The protein belongs to the ClpS family. Interacts with CLPC1 (via N-terminus) and CLPC2, but not with CLPt1 or CLPT2. Binds to ClpF; this interaction stimulates their association with ClpC. In terms of tissue distribution, expressed exclusively in photosynthetic green tissues with high levels in young, developing leaf tissues.

The protein localises to the plastid. It is found in the chloroplast stroma. In terms of biological role, small adapter protein that modulate the activity of CLPC. Involved in plastid biogenesis in particular when chloroplast protein synthesis capacity is a limiting factor. Probably involved in substrate selection for plastid Clp protease system. Recruitment to ClpC chaperones is facilitated by CLPF thus forming a binary adapter for selective substrate recognition and delivery to plastid Clp protease system (CLPC). This chain is ATP-dependent Clp protease adapter protein CLPS1, chloroplastic, found in Arabidopsis thaliana (Mouse-ear cress).